The following is a 906-amino-acid chain: Valine--tRNA ligase (906 aa).

Positions 43-53 (PNVTGSLHIGH) match the 'HIGH' region motif. Positions 548 to 552 (KMSKS) match the 'KMSKS' region motif. K551 serves as a coordination point for ATP. Residues 842–905 (EKARLTKDIA…EAALSRLASV (64 aa)) adopt a coiled-coil conformation.

This sequence belongs to the class-I aminoacyl-tRNA synthetase family. ValS type 1 subfamily. In terms of assembly, monomer.

Its subcellular location is the cytoplasm. It catalyses the reaction tRNA(Val) + L-valine + ATP = L-valyl-tRNA(Val) + AMP + diphosphate. Catalyzes the attachment of valine to tRNA(Val). As ValRS can inadvertently accommodate and process structurally similar amino acids such as threonine, to avoid such errors, it has a 'posttransfer' editing activity that hydrolyzes mischarged Thr-tRNA(Val) in a tRNA-dependent manner. The sequence is that of Valine--tRNA ligase from Caulobacter vibrioides (strain ATCC 19089 / CIP 103742 / CB 15) (Caulobacter crescentus).